The chain runs to 145 residues: Large ribosomal subunit protein bL17 (145 aa).

Belongs to the bacterial ribosomal protein bL17 family. Part of the 50S ribosomal subunit. Contacts protein L32.

The protein is Large ribosomal subunit protein bL17 of Orientia tsutsugamushi (strain Ikeda) (Rickettsia tsutsugamushi).